Reading from the N-terminus, the 161-residue chain is Large ribosomal subunit protein uL15 (161 aa).

The segment at 1-43 (MKLSDIADNAGARKKRMRVGRGIGSGKGKTSGRGGKGQTARSG) is disordered. Residues 21-37 (RGIGSGKGKTSGRGGKG) are compositionally biased toward gly residues.

The protein belongs to the universal ribosomal protein uL15 family. As to quaternary structure, part of the 50S ribosomal subunit.

Functionally, binds to the 23S rRNA. This is Large ribosomal subunit protein uL15 from Bradyrhizobium sp. (strain BTAi1 / ATCC BAA-1182).